The following is a 1254-amino-acid chain: MDSFDLALLQEWDLESLWGEDILSQRNDSLVLEVQASASRCRSVYEPDRNALRRKERERRSQETQQDSGSFNSGYSLFSEPYKTNKGDELSNRIQNTLGNYDEMKDFLTDRSNQSHLVGVPKPGVPQTPVNKIDEHFGAESRAQPQPSTVCSTASSTPAAVPVQQGKRGAMGWQKAGHPPSDGQQRAAQQGSLRTLLGDGVGRQQTRAKQVCNMETGLQTQERPPAMAAKHGGSGHCVQNFPPSLASKPSLVQQKPTAYVRPMDGQDQAPDESPKLKSSTETAVHCTAYRGVPANKPESARAKAKLAKFSIPKQAEESRSGENNSCVEEIIREMTWLPPLSAIQAPAKVEPSKFPFPNKDSQLVSSGHSNPKKADAEPGSPDNGASNTSTLEDDLKLSSDDEEGEQQAAQRTALRALADSSVVQQTNCRGSAPSSKGGGSSSSSGGSSSSSDSESTSGSDSETESSSSSSESEGSKPPHCSSPEAEPASSNKWQLDKWLNKVNPHKPPILIQNESHGPERNQYYTPPVKDEGQDCGKLPEICQASLRDKELKTTCKEEQRPRTANKAPGSKSVKQKSPPAAVAVTAAALPPAVPSAPTESAPAPTRRSAGKKPTRRTERTSAGDGANCHRPEEPVAPDTLGASVVGPLEPPKTRPCGNNRTGHRKELRSSVTCEKRRTRGLSRIVPKSKEFIETESSSSSSSSDSDLESEQEEYVLSKAPTTTGSEQRLKEAASSNNNSNSNSSTSRASVGSINARTTSDIAKELEEQFYTLVPFGRNELLSPLKDSDEVRSLWVKIDLTLLSRIPEHLSQEPGVLSAPSAKDTDSAPASHALDAPAEKTLPKSKRKRKCDNEDDYREIKKVQGRKESASRLAASTNNTLSGNHCNVNVNSLAIPINKNEKMLRSPTSPLSDTCKHKYASEDLTSSSRPHGNGLLTSASSNKEPKAESQLQTIAGDLTKASHNSSENGTLHSKSRPQTEPWSPGSNGHRDCKRQKLIFDDMPRSADYFMREAKRMKHKADAMVEKFGKALNYAEAALSFIECGNAMEQGPMESKSPYTMYSETVELIRYAMRLKTHSGPNATPEDKQLAALCYRCLALLYWRMFRLKRDHAVKYSKALIDYFKNSSKAAQAPSPWGSSGKSTGSPSPMSPNPSPASSVGSQGSLSSSSGLSPSTIVSIPQRIHQMAANHVSITNSILHSYDYWEMADNLAKENREFFNDLDLLMGPVTLHSSMEHLVQYSQQGLHWLRSSVHLS.

Over residues 45 to 62 (YEPDRNALRRKERERRSQ) the composition is skewed to basic and acidic residues. 5 disordered regions span residues 45 to 90 (YEPD…GDEL), 139 to 190 (AESR…AAQQ), 261 to 324 (RPMD…GENN), 350 to 534 (EPSK…EGQD), and 552 to 752 (KTTC…SVGS). Composition is skewed to polar residues over residues 67–76 (DSGSFNSGYS) and 143–158 (AQPQ…SSTP). Polar residues predominate over residues 359 to 369 (KDSQLVSSGHS). Residues 406-418 (QQAAQRTALRALA) are compositionally biased toward low complexity. Positions 421–433 (SVVQQTNCRGSAP) are enriched in polar residues. Over residues 441–472 (SSSSGGSSSSSDSESTSGSDSETESSSSSSES) the composition is skewed to low complexity. Residues 552-561 (KTTCKEEQRP) show a composition bias toward basic and acidic residues. Positions 577–605 (SPPAAVAVTAAALPPAVPSAPTESAPAPT) are enriched in low complexity. The span at 615-633 (RRTERTSAGDGANCHRPEE) shows a compositional bias: basic and acidic residues. 2 stretches are compositionally biased toward low complexity: residues 694-704 (TESSSSSSSSD) and 732-749 (AASS…SRAS). Serine 782 is subject to Phosphoserine. Residues 813-883 (PGVLSAPSAK…ASTNNTLSGN (71 aa)) form a disordered region. The span at 857-869 (REIKKVQGRKESA) shows a compositional bias: basic and acidic residues. Polar residues predominate over residues 873-883 (AASTNNTLSGN). Serine 908 is subject to Phosphoserine. Disordered regions lie at residues 919-991 (ASED…HRDC) and 1128-1171 (AAQA…SGLS). Polar residues-rich tracts occupy residues 922–941 (DLTS…ASSN) and 960–985 (ASHN…SPGS). Low complexity-rich tracts occupy residues 1132–1146 (PSPW…GSPS) and 1154–1171 (PASS…SGLS).

The protein belongs to the AF4 family. Highest levels found in lymphoid tissues, lower levels in brain and lung.

The protein resides in the nucleus. In terms of biological role, putative transcription activator that may function in lymphoid development and oncogenesis. The sequence is that of AF4/FMR2 family member 3 (Aff3) from Mus musculus (Mouse).